Consider the following 612-residue polypeptide: Peroxisomal carnitine O-octanoyltransferase (612 aa).

N-acetylmethionine is present on Met1. An N6-succinyllysine mark is found at Lys40 and Lys57. His327 (proton acceptor) is an active-site residue. CoA is bound by residues Lys406 and 410–417 (KKEALHPD). Position 406 is an N6-acetyllysine; alternate (Lys406). Lys406 carries the post-translational modification N6-succinyllysine; alternate. Residues Tyr439, Thr441, and Thr452 each coordinate (R)-carnitine. The Microbody targeting signal signature appears at 610–612 (AHL).

This sequence belongs to the carnitine/choline acetyltransferase family. Liver.

The protein resides in the peroxisome. The enzyme catalyses octanoyl-CoA + (R)-carnitine = O-octanoyl-(R)-carnitine + CoA. It carries out the reaction 4,8-dimethylnonanoyl-CoA + (R)-carnitine = O-4,8-dimethylnonanoyl-(R)-carnitine + CoA. Its pathway is lipid metabolism; fatty acid beta-oxidation. Its function is as follows. Beta-oxidation of fatty acids. The highest activity concerns the C6 to C10 chain length substrate. This chain is Peroxisomal carnitine O-octanoyltransferase (Crot), found in Rattus norvegicus (Rat).